Consider the following 344-residue polypeptide: Probable Delta(7)-sterol 5(6)-desaturase (344 aa).

3 helical membrane passes run 76-96 (LSLF…FASL), 123-143 (QTNA…VAEV), and 160-180 (WYDF…IYWI). The 126-residue stretch at 167-292 (PLFIMFTDFG…FTTLWDRLGG (126 aa)) folds into the Fatty acid hydroxylase domain. Residues 181–185 (HRGLH) carry the Histidine box-1 motif. The Histidine box-2 signature appears at 194-198 (HKPHH). The chain crosses the membrane as a helical span at residues 224 to 244 (HIFPFIFPLQKMAYVGLFVFI). A Histidine box-3 motif is present at residues 269-273 (HSVHH).

Belongs to the sterol desaturase family. It depends on Fe cation as a cofactor.

The protein resides in the endoplasmic reticulum membrane. It catalyses the reaction a Delta(7)-sterol + 2 Fe(II)-[cytochrome b5] + O2 + 2 H(+) = a Delta(5),Delta(7)-sterol + 2 Fe(III)-[cytochrome b5] + 2 H2O. Its pathway is steroid metabolism; ergosterol biosynthesis; ergosterol from zymosterol: step 3/5. Functionally, catalyzes the introduction of a C-5 double bond in the B ring of ergosterol. May contribute to the regulation of ergosterol biosynthesis. This Neurospora crassa (strain ATCC 24698 / 74-OR23-1A / CBS 708.71 / DSM 1257 / FGSC 987) protein is Probable Delta(7)-sterol 5(6)-desaturase.